We begin with the raw amino-acid sequence, 476 residues long: Aspartyl/glutamyl-tRNA(Asn/Gln) amidotransferase subunit B (476 aa).

Belongs to the GatB/GatE family. GatB subfamily. As to quaternary structure, heterotrimer of A, B and C subunits.

The catalysed reaction is L-glutamyl-tRNA(Gln) + L-glutamine + ATP + H2O = L-glutaminyl-tRNA(Gln) + L-glutamate + ADP + phosphate + H(+). It catalyses the reaction L-aspartyl-tRNA(Asn) + L-glutamine + ATP + H2O = L-asparaginyl-tRNA(Asn) + L-glutamate + ADP + phosphate + 2 H(+). Its function is as follows. Allows the formation of correctly charged Asn-tRNA(Asn) or Gln-tRNA(Gln) through the transamidation of misacylated Asp-tRNA(Asn) or Glu-tRNA(Gln) in organisms which lack either or both of asparaginyl-tRNA or glutaminyl-tRNA synthetases. The reaction takes place in the presence of glutamine and ATP through an activated phospho-Asp-tRNA(Asn) or phospho-Glu-tRNA(Gln). This chain is Aspartyl/glutamyl-tRNA(Asn/Gln) amidotransferase subunit B, found in Neisseria gonorrhoeae (strain ATCC 700825 / FA 1090).